The primary structure comprises 757 residues: Xaa-Pro dipeptidyl-peptidase (757 aa).

Residues serine 348, aspartate 468, and histidine 498 each act as charge relay system in the active site.

Belongs to the peptidase S15 family. In terms of assembly, homodimer.

It is found in the cytoplasm. It carries out the reaction Hydrolyzes Xaa-Pro-|- bonds to release unblocked, N-terminal dipeptides from substrates including Ala-Pro-|-p-nitroanilide and (sequentially) Tyr-Pro-|-Phe-Pro-|-Gly-Pro-|-Ile.. In terms of biological role, removes N-terminal dipeptides sequentially from polypeptides having unsubstituted N-termini provided that the penultimate residue is proline. In Streptococcus pneumoniae (strain ATCC 700669 / Spain 23F-1), this protein is Xaa-Pro dipeptidyl-peptidase.